Reading from the N-terminus, the 400-residue chain is 3-phenylpropionate/cinnamic acid dioxygenase ferredoxin--NAD(+) reductase component (400 aa).

Residue 5-36 coordinates FAD; the sequence is TIIIVGGGQAAAMAAASLRQQGFTGELHLFSD. NAD(+) is bound at residue 146–174; it reads SVVIVGAGTIGLELAASATQRRCKVTVIE.

It belongs to the bacterial ring-hydroxylating dioxygenase ferredoxin reductase family. As to quaternary structure, this dioxygenase system consists of four proteins: the two subunits of the hydroxylase component (HcaE and HcaF), a ferredoxin (HcaC) and a ferredoxin reductase (HcaD). It depends on FAD as a cofactor.

It catalyses the reaction 2 reduced [2Fe-2S]-[ferredoxin] + NAD(+) + H(+) = 2 oxidized [2Fe-2S]-[ferredoxin] + NADH. It participates in aromatic compound metabolism; 3-phenylpropanoate degradation. Part of the multicomponent 3-phenylpropionate dioxygenase, that converts 3-phenylpropionic acid (PP) and cinnamic acid (CI) into 3-phenylpropionate-dihydrodiol (PP-dihydrodiol) and cinnamic acid-dihydrodiol (CI-dihydrodiol), respectively. In Escherichia coli O157:H7, this protein is 3-phenylpropionate/cinnamic acid dioxygenase ferredoxin--NAD(+) reductase component.